Consider the following 128-residue polypeptide: Large ribosomal subunit protein bL12 (128 aa).

Belongs to the bacterial ribosomal protein bL12 family. Homodimer. Part of the ribosomal stalk of the 50S ribosomal subunit. Forms a multimeric L10(L12)X complex, where L10 forms an elongated spine to which 2 to 4 L12 dimers bind in a sequential fashion. Binds GTP-bound translation factors.

Forms part of the ribosomal stalk which helps the ribosome interact with GTP-bound translation factors. Is thus essential for accurate translation. This Picosynechococcus sp. (strain ATCC 27264 / PCC 7002 / PR-6) (Agmenellum quadruplicatum) protein is Large ribosomal subunit protein bL12.